The following is a 189-amino-acid chain: ATP synthase subunit b 1 (189 aa).

Residues 32 to 52 (TYFASQLFWLTIAFVILYIAL) traverse the membrane as a helical segment.

It belongs to the ATPase B chain family. In terms of assembly, F-type ATPases have 2 components, F(1) - the catalytic core - and F(0) - the membrane proton channel. F(1) has five subunits: alpha(3), beta(3), gamma(1), delta(1), epsilon(1). F(0) has three main subunits: a(1), b(2) and c(10-14). The alpha and beta chains form an alternating ring which encloses part of the gamma chain. F(1) is attached to F(0) by a central stalk formed by the gamma and epsilon chains, while a peripheral stalk is formed by the delta and b chains.

Its subcellular location is the cell inner membrane. Functionally, f(1)F(0) ATP synthase produces ATP from ADP in the presence of a proton or sodium gradient. F-type ATPases consist of two structural domains, F(1) containing the extramembraneous catalytic core and F(0) containing the membrane proton channel, linked together by a central stalk and a peripheral stalk. During catalysis, ATP synthesis in the catalytic domain of F(1) is coupled via a rotary mechanism of the central stalk subunits to proton translocation. Component of the F(0) channel, it forms part of the peripheral stalk, linking F(1) to F(0). This is ATP synthase subunit b 1 from Maricaulis maris (strain MCS10) (Caulobacter maris).